Consider the following 130-residue polypeptide: Serum amyloid A-4 protein (130 aa).

Residues 1–18 (MRLATVIVLCSLFLGVSG) form the signal peptide. Residues 109-130 (EEWGRSGKNPNHFRPEGLPEKF) form a disordered region. Over residues 121–130 (FRPEGLPEKF) the composition is skewed to basic and acidic residues.

Belongs to the SAA family. Apolipoprotein of the HDL complex. Expressed by the liver; secreted in plasma.

It localises to the secreted. Its function is as follows. Major acute phase reactant. The polypeptide is Serum amyloid A-4 protein (Mus musculus (Mouse)).